A 436-amino-acid chain; its full sequence is Adenosylmethionine-8-amino-7-oxononanoate aminotransferase (436 aa).

Trp66 contacts substrate. 126–127 (GS) lines the pyridoxal 5'-phosphate pocket. Tyr159 lines the substrate pocket. Asp256 contributes to the pyridoxal 5'-phosphate binding site. Substrate is bound by residues Lys285 and Gly318. Lys285 bears the N6-(pyridoxal phosphate)lysine mark. 319–320 (PT) serves as a coordination point for pyridoxal 5'-phosphate. A substrate-binding site is contributed by Arg402.

This sequence belongs to the class-III pyridoxal-phosphate-dependent aminotransferase family. BioA subfamily. In terms of assembly, homodimer. Pyridoxal 5'-phosphate serves as cofactor.

It localises to the cytoplasm. It carries out the reaction (8S)-8-amino-7-oxononanoate + S-adenosyl-L-methionine = S-adenosyl-4-methylsulfanyl-2-oxobutanoate + (7R,8S)-7,8-diammoniononanoate. It functions in the pathway cofactor biosynthesis; biotin biosynthesis; 7,8-diaminononanoate from 8-amino-7-oxononanoate (SAM route): step 1/1. Its function is as follows. Catalyzes the transfer of the alpha-amino group from S-adenosyl-L-methionine (SAM) to 7-keto-8-aminopelargonic acid (KAPA) to form 7,8-diaminopelargonic acid (DAPA). It is the only aminotransferase known to utilize SAM as an amino donor. The chain is Adenosylmethionine-8-amino-7-oxononanoate aminotransferase from Mycobacterium leprae (strain TN).